A 963-amino-acid chain; its full sequence is Aminopeptidase N (963 aa).

Residues 2-8 (AKGFYIS) are Cytoplasmic-facing. Residues 9–32 (KALGILGILLGVAAVATIIALSVV) traverse the membrane as a helical; Signal-anchor for type II membrane protein segment. The interval 33 to 64 (YAQEKNKNAEHVPQAPTSPTITTTAAITLDQS) is cytosolic Ser/Thr-rich junction. At 33 to 963 (YAQEKNKNAE…VVLNWFIEHS (931 aa)) the chain is on the extracellular side. Residues 65-963 (KPWNRYRLPT…VVLNWFIEHS (899 aa)) form a metalloprotease region. N-linked (GlcNAc...) asparagine glycans are attached at residues N82 and N124. Y171 is modified (sulfotyrosine). N-linked (GlcNAc...) asparagine glycans are attached at residues N229, N237, N258, N286, N314, and N328. Position 347-351 (347-351 (GAMEN)) interacts with substrate. H383 lines the Zn(2+) pocket. E384 acts as the Proton acceptor in catalysis. Positions 387 and 406 each coordinate Zn(2+). N-linked (GlcNAc...) asparagine glycosylation is found at N506, N556, N569, N622, N646, and N736. The segment at 717-813 (KYLRKQVEPL…DQWDFAWGQL (97 aa)) is interaction with TGEV spike glycoprotein. Disulfide bonds link C758/C765 and C795/C831.

Belongs to the peptidase M1 family. Homodimer. Interacts with SLC6A19. As to quaternary structure, (Microbial infection) Interacts with TGEV and PRCoV spike glycoprotein. Requires Zn(2+) as cofactor. Post-translationally, sulfated. N- and O-glycosylated. In terms of processing, may undergo proteolysis and give rise to a soluble form.

It is found in the cell membrane. The enzyme catalyses Release of an N-terminal amino acid, Xaa-|-Yaa- from a peptide, amide or arylamide. Xaa is preferably Ala, but may be most amino acids including Pro (slow action). When a terminal hydrophobic residue is followed by a prolyl residue, the two may be released as an intact Xaa-Pro dipeptide.. Broad specificity aminopeptidase which plays a role in the final digestion of peptides generated from hydrolysis of proteins by gastric and pancreatic proteases. Also involved in the processing of various peptides including peptide hormones, such as angiotensin III and IV, neuropeptides, and chemokines. May also be involved the cleavage of peptides bound to major histocompatibility complex class II molecules of antigen presenting cells. May have a role in angiogenesis and promote cholesterol crystallization. It is able to degrade Leu-enkephalin and Met-enkephalin but not cholecystokinin CCK8, neuromedin C (GRP-10), somatostatin-14, substance P and vasoactive intestinal peptide. May have a role in amino acid transport by acting as binding partner of amino acid transporter SLC6A19 and regulating its activity. In terms of biological role, (Microbial infection) In case of porcine transmissible gastroenteritis coronavirus (TGEV) and porcine respiratory coronavirus (PRCoV) infections, serves as a receptor for TGEV and PRCoV spike glycoprotein in a species-specific manner. This is Aminopeptidase N (ANPEP) from Sus scrofa (Pig).